Reading from the N-terminus, the 507-residue chain is Histidine ammonia-lyase (507 aa).

A cross-link (5-imidazolinone (Ala-Gly)) is located at residues 141-143 (ASG). 2,3-didehydroalanine (Ser) is present on S142.

Belongs to the PAL/histidase family. In terms of processing, contains an active site 4-methylidene-imidazol-5-one (MIO), which is formed autocatalytically by cyclization and dehydration of residues Ala-Ser-Gly.

The protein localises to the cytoplasm. It carries out the reaction L-histidine = trans-urocanate + NH4(+). Its pathway is amino-acid degradation; L-histidine degradation into L-glutamate; N-formimidoyl-L-glutamate from L-histidine: step 1/3. The polypeptide is Histidine ammonia-lyase (Natranaerobius thermophilus (strain ATCC BAA-1301 / DSM 18059 / JW/NM-WN-LF)).